A 426-amino-acid chain; its full sequence is MTRIEMAKKGIITEEVRQVAQEEGVFPEELSQNIAEGRVVITRNILRNIKPLGIGKGLRTKINANIGTSRDKTDIQEELEKLDIAVKYGADAVMDLSTGGPLTEMRRAILKHSSVSIGTVPIYEVAVRAIEKYGNIVKMTVDDIFNVIEEHAKDGVDFVTVHCGVTKKIVEMLKSGDRVLPIVSRGGSILADWICYHDKENPLYEYFDRLLELAKKYDLTLSLGDGLRPGCLADATDRYQLIELITIGKLKDIAISEGVQCIIEGPGHLPLNHVETNIKLQKSICKEAPFYVLGPLVTDCAMGYDHIAAAIGGALAGMYGADFLCYVTPSEHIRLPDKEDVKEGVIASRIAAHAADIAKGYAKAWQRDNKMAEARRNFDWQSQISLSFDPDKVHSMRSERPPLEDEKVCSMCGEFCAIKISRRAVE.

Substrate-binding positions include Asn-65, Met-94, Tyr-123, His-162, 184–186 (SRG), 225–228 (DGLR), and Glu-264. His-268 contributes to the Zn(2+) binding site. Tyr-291 serves as a coordination point for substrate. Residue His-332 participates in Zn(2+) binding. [4Fe-4S] cluster-binding residues include Cys-409, Cys-412, and Cys-416.

This sequence belongs to the ThiC family. The cofactor is [4Fe-4S] cluster.

The enzyme catalyses 5-amino-1-(5-phospho-beta-D-ribosyl)imidazole + S-adenosyl-L-methionine = 4-amino-2-methyl-5-(phosphooxymethyl)pyrimidine + CO + 5'-deoxyadenosine + formate + L-methionine + 3 H(+). It functions in the pathway cofactor biosynthesis; thiamine diphosphate biosynthesis. In terms of biological role, catalyzes the synthesis of the hydroxymethylpyrimidine phosphate (HMP-P) moiety of thiamine from aminoimidazole ribotide (AIR) in a radical S-adenosyl-L-methionine (SAM)-dependent reaction. The protein is Phosphomethylpyrimidine synthase of Thermodesulfovibrio yellowstonii (strain ATCC 51303 / DSM 11347 / YP87).